The sequence spans 319 residues: ATP-dependent 6-phosphofructokinase (319 aa).

ATP is bound by residues Gly-11, 72 to 73, and 102 to 105; these read RS and GDGS. A Mg(2+)-binding site is contributed by Asp-103. 126-128 contributes to the substrate binding site; that stretch reads TID. Asp-128 (proton acceptor) is an active-site residue. Arg-155 is an ADP binding site. Substrate-binding positions include Arg-163 and 170 to 172; that span reads MGR. 186–188 serves as a coordination point for ADP; the sequence is GAE. Residues Glu-223, Arg-245, and 251 to 254 contribute to the substrate site; that span reads HTQR.

The protein belongs to the phosphofructokinase type A (PFKA) family. ATP-dependent PFK group I subfamily. Prokaryotic clade 'B1' sub-subfamily. As to quaternary structure, homotetramer. Mg(2+) serves as cofactor.

It localises to the cytoplasm. It catalyses the reaction beta-D-fructose 6-phosphate + ATP = beta-D-fructose 1,6-bisphosphate + ADP + H(+). The protein operates within carbohydrate degradation; glycolysis; D-glyceraldehyde 3-phosphate and glycerone phosphate from D-glucose: step 3/4. Its activity is regulated as follows. Allosterically activated by ADP and other diphosphonucleosides, and allosterically inhibited by phosphoenolpyruvate. Its function is as follows. Catalyzes the phosphorylation of D-fructose 6-phosphate to fructose 1,6-bisphosphate by ATP, the first committing step of glycolysis. This is ATP-dependent 6-phosphofructokinase from Sulfurimonas denitrificans (strain ATCC 33889 / DSM 1251) (Thiomicrospira denitrificans (strain ATCC 33889 / DSM 1251)).